Reading from the N-terminus, the 63-residue chain is Large ribosomal subunit protein uL29 (63 aa).

It belongs to the universal ribosomal protein uL29 family.

The polypeptide is Large ribosomal subunit protein uL29 (Yersinia pseudotuberculosis serotype O:1b (strain IP 31758)).